Consider the following 135-residue polypeptide: UPF0251 protein Hore_18270 (135 aa).

The protein belongs to the UPF0251 family.

In Halothermothrix orenii (strain H 168 / OCM 544 / DSM 9562), this protein is UPF0251 protein Hore_18270.